A 374-amino-acid polypeptide reads, in one-letter code: Ribosomal RNA large subunit methyltransferase G (374 aa).

The protein belongs to the methyltransferase superfamily. RlmG family.

It localises to the cytoplasm. The catalysed reaction is guanosine(1835) in 23S rRNA + S-adenosyl-L-methionine = N(2)-methylguanosine(1835) in 23S rRNA + S-adenosyl-L-homocysteine + H(+). Functionally, specifically methylates the guanine in position 1835 (m2G1835) of 23S rRNA. This Pseudomonas fluorescens (strain Pf0-1) protein is Ribosomal RNA large subunit methyltransferase G.